The following is a 665-amino-acid chain: mRNA cleavage and polyadenylation factor CLP1 (665 aa).

Residues Lys-91 and 195-200 (SAGKTS) each bind ATP. Disordered regions lie at residues 218–283 (VKEG…SQAK) and 593–615 (PPPR…HDYE). Basic and acidic residues-rich tracts occupy residues 219–238 (KEGD…EIHP) and 598–614 (QSKD…HHDY).

This sequence belongs to the Clp1 family. Clp1 subfamily. Component of a pre-mRNA cleavage factor complex. Interacts directly with PCF11.

The protein resides in the nucleus. In terms of biological role, required for endonucleolytic cleavage during polyadenylation-dependent pre-mRNA 3'-end formation. This Malassezia globosa (strain ATCC MYA-4612 / CBS 7966) (Dandruff-associated fungus) protein is mRNA cleavage and polyadenylation factor CLP1.